We begin with the raw amino-acid sequence, 513 residues long: Protein phosphatase 1H (513 aa).

At S7 the chain carries Phosphoserine. Residues 77 to 506 form the PPM-type phosphatase domain; that stretch reads ATGYAEVINA…DDISVYVIPL (430 aa). The interval 110–133 is disordered; sequence ITSTPNRNSKRRSSLPNGEGLQLK. T113 is subject to Phosphothreonine. Phosphoserine occurs at positions 123 and 210. Omega-N-methylarginine is present on R212. S220 is subject to Phosphoserine. The residue at position 223 (T223) is a Phosphothreonine. S421 is modified (phosphoserine).

It belongs to the PP2C family.

The protein resides in the nucleus. The protein localises to the cytoplasm. The catalysed reaction is O-phospho-L-seryl-[protein] + H2O = L-seryl-[protein] + phosphate. It catalyses the reaction O-phospho-L-threonyl-[protein] + H2O = L-threonyl-[protein] + phosphate. In terms of biological role, dephosphorylates CDKN1B at 'Thr-187', thus removing a signal for proteasomal degradation. The sequence is that of Protein phosphatase 1H (Ppm1h) from Rattus norvegicus (Rat).